The following is a 1705-amino-acid chain: Homeobox-DDT domain protein RLT1 (1705 aa).

Disordered stretches follow at residues 1–53 (MEMG…QLET), 118–167 (ELPA…EYET), 237–267 (HDPR…TPNM), 296–322 (GPVP…MPSP), and 352–414 (GVRK…RKEE). The segment at residues 39 to 98 (VKPKRQMKTPFQLETLEKVYSEEKYPSEATRAELSEKLDLSDRQLQMWFCHRRLKDKKDG) is a DNA-binding region (homeobox). Positions 136-159 (GSESGCSPYSNSRRNFASGSSSSR) are enriched in low complexity. 2 stretches are compositionally biased toward polar residues: residues 253 to 265 (EQQS…SFTP) and 310 to 319 (RNCSTSQQDM). The region spanning 549–608 (DETVGNLLMVWRFLISFSDVLDLWPFTLDEFIQAFHDYDSRLLGEIHVTLLRSIIRDVED) is the DDT domain. The region spanning 731-800 (GTVKFAAFHV…APSTYCVRAP (70 aa)) is the HTH HARE-type domain. Disordered stretches follow at residues 1028–1053 (TRER…DLSN), 1198–1229 (VNHS…SIRV), 1441–1502 (PEDE…KAQS), 1561–1635 (PKSE…FVDY), and 1652–1705 (AIEE…SSDS). A compositionally biased stretch (low complexity) spans 1201 to 1220 (SPTDSVSPSSSAISGSNSDS). The span at 1455–1465 (SPFKGKGPREQ) shows a compositional bias: basic and acidic residues. 3 stretches are compositionally biased toward acidic residues: residues 1565 to 1574 (EVEEDEEEEE), 1611 to 1628 (VDDE…DEDG), and 1669 to 1684 (GEDD…DDDV).

In terms of assembly, interacts with CHR11 and CHR17. Interacts (via the DDT domain) with CHR11 (via C-terminus). As to expression, highly expressed in growing tissues such as inflorescence and flower meristems, young leaves and floral organs. Expressed in roots, rosette and cauline leaves, stems, flowers, inflorescences and siliques.

The protein localises to the nucleus. Transcriptional regulator required for the maintenance of the plant vegetative phase. In association with CHR11 or CHR17 may prevent the early activation of the vegetative-to-reproductive transition by regulating key genes that contribute to flower timing, such as FT, SEP1, SEP3, AGL8/FUL, SOC1 and FLC. This chain is Homeobox-DDT domain protein RLT1, found in Arabidopsis thaliana (Mouse-ear cress).